A 399-amino-acid chain; its full sequence is Phosphoglycerate kinase (399 aa).

Substrate is bound by residues 22–24 (DFN), arginine 38, 61–64 (HLGR), arginine 120, and arginine 153. ATP is bound by residues lysine 206, glycine 297, glutamate 328, and 354–357 (GGDT).

This sequence belongs to the phosphoglycerate kinase family. Monomer.

Its subcellular location is the cytoplasm. The catalysed reaction is (2R)-3-phosphoglycerate + ATP = (2R)-3-phospho-glyceroyl phosphate + ADP. The protein operates within carbohydrate degradation; glycolysis; pyruvate from D-glyceraldehyde 3-phosphate: step 2/5. In Campylobacter concisus (strain 13826), this protein is Phosphoglycerate kinase.